The following is a 236-amino-acid chain: Auxin-responsive protein IAA13 (236 aa).

Disordered regions lie at residues 1–24 (MAGA…GGAA), 52–93 (EAAA…WPPV), and 105–130 (SVKS…GSNS). Residues 12 to 16 (LRLGL) carry the EAR-like (transcriptional repression) motif. Positions 52 to 61 (EAAAGKAEAP) are enriched in low complexity. Positions 62–81 (AAEKAKRPAEAAAADAEKPP) are enriched in basic and acidic residues. Residues 117 to 130 (QQQQPAANASGSNS) are compositionally biased toward low complexity. One can recognise a PB1 domain in the interval 131-218 (SAFVKVSMDG…SCKRLRIMKG (88 aa)).

The protein belongs to the Aux/IAA family. As to quaternary structure, homodimers and heterodimers.

The protein localises to the nucleus. Its function is as follows. Aux/IAA proteins are short-lived transcriptional factors that function as repressors of early auxin response genes at low auxin concentrations. The chain is Auxin-responsive protein IAA13 (IAA13) from Oryza sativa subsp. japonica (Rice).